Here is a 365-residue protein sequence, read N- to C-terminus: Virion host shutoff protein (365 aa).

The protein belongs to the herpesviridae VHS protein family.

It localises to the virion. Minor structural protein that acts as an endoribonuclease during lytic infection. Degrades host mRNAs in the cytoplasm by cutting them at preferred sites, including some in regions of translation initiation. This is Virion host shutoff protein (VHS) from Sus scrofa (Pig).